Reading from the N-terminus, the 299-residue chain is Bifunctional protein FolD 2 (299 aa).

NADP(+)-binding positions include 168 to 170 (GRS), serine 193, and isoleucine 234.

This sequence belongs to the tetrahydrofolate dehydrogenase/cyclohydrolase family. As to quaternary structure, homodimer.

The enzyme catalyses (6R)-5,10-methylene-5,6,7,8-tetrahydrofolate + NADP(+) = (6R)-5,10-methenyltetrahydrofolate + NADPH. It catalyses the reaction (6R)-5,10-methenyltetrahydrofolate + H2O = (6R)-10-formyltetrahydrofolate + H(+). It functions in the pathway one-carbon metabolism; tetrahydrofolate interconversion. Functionally, catalyzes the oxidation of 5,10-methylenetetrahydrofolate to 5,10-methenyltetrahydrofolate and then the hydrolysis of 5,10-methenyltetrahydrofolate to 10-formyltetrahydrofolate. This Rhizobium etli (strain ATCC 51251 / DSM 11541 / JCM 21823 / NBRC 15573 / CFN 42) protein is Bifunctional protein FolD 2.